The chain runs to 325 residues: Tetraacyldisaccharide 4'-kinase (325 aa).

54–61 contributes to the ATP binding site; sequence SVGGTGKT.

This sequence belongs to the LpxK family.

The enzyme catalyses a lipid A disaccharide + ATP = a lipid IVA + ADP + H(+). The protein operates within glycolipid biosynthesis; lipid IV(A) biosynthesis; lipid IV(A) from (3R)-3-hydroxytetradecanoyl-[acyl-carrier-protein] and UDP-N-acetyl-alpha-D-glucosamine: step 6/6. Functionally, transfers the gamma-phosphate of ATP to the 4'-position of a tetraacyldisaccharide 1-phosphate intermediate (termed DS-1-P) to form tetraacyldisaccharide 1,4'-bis-phosphate (lipid IVA). This chain is Tetraacyldisaccharide 4'-kinase, found in Rickettsia felis (strain ATCC VR-1525 / URRWXCal2) (Rickettsia azadi).